A 64-amino-acid polypeptide reads, in one-letter code: Large ribosomal subunit protein bL35 (64 aa).

The protein belongs to the bacterial ribosomal protein bL35 family.

The polypeptide is Large ribosomal subunit protein bL35 (Coxiella burnetii (strain RSA 331 / Henzerling II)).